The primary structure comprises 832 residues: Protein translocase subunit SecA (832 aa).

ATP-binding positions include Gln-87, 105-109 (GEGKT), and Asp-512.

This sequence belongs to the SecA family. Monomer and homodimer. Part of the essential Sec protein translocation apparatus which comprises SecA, SecYEG and auxiliary proteins SecDF-YajC and YidC.

Its subcellular location is the cell membrane. The protein resides in the cytoplasm. The enzyme catalyses ATP + H2O + cellular proteinSide 1 = ADP + phosphate + cellular proteinSide 2.. In terms of biological role, part of the Sec protein translocase complex. Interacts with the SecYEG preprotein conducting channel. Has a central role in coupling the hydrolysis of ATP to the transfer of proteins into and across the cell membrane, serving as an ATP-driven molecular motor driving the stepwise translocation of polypeptide chains across the membrane. The polypeptide is Protein translocase subunit SecA (Wigglesworthia glossinidia brevipalpis).